Consider the following 62-residue polypeptide: Photosystem II reaction center protein Z (62 aa).

The next 2 membrane-spanning stretches (helical) occupy residues 8-28 and 41-61; these read SVFA…VVLA and FSGA…NSFI.

It belongs to the PsbZ family. As to quaternary structure, PSII is composed of 1 copy each of membrane proteins PsbA, PsbB, PsbC, PsbD, PsbE, PsbF, PsbH, PsbI, PsbJ, PsbK, PsbL, PsbM, PsbT, PsbY, PsbZ, Psb30/Ycf12, at least 3 peripheral proteins of the oxygen-evolving complex and a large number of cofactors. It forms dimeric complexes.

The protein resides in the plastid. Its subcellular location is the chloroplast thylakoid membrane. May control the interaction of photosystem II (PSII) cores with the light-harvesting antenna, regulates electron flow through the 2 photosystem reaction centers. PSII is a light-driven water plastoquinone oxidoreductase, using light energy to abstract electrons from H(2)O, generating a proton gradient subsequently used for ATP formation. The polypeptide is Photosystem II reaction center protein Z (Staurastrum punctulatum (Green alga)).